Here is a 241-residue protein sequence, read N- to C-terminus: Kynurenine formamidase (241 aa).

The HGGXW motif lies at 23–27; that stretch reads HGGAW. The Nucleophile role is filled by Ser95. Catalysis depends on residues Asp191 and His223.

Belongs to the kynurenine formamidase family. As to quaternary structure, homodimer.

The enzyme catalyses N-formyl-L-kynurenine + H2O = L-kynurenine + formate + H(+). The protein operates within amino-acid degradation; L-tryptophan degradation via kynurenine pathway; L-kynurenine from L-tryptophan: step 2/2. Its function is as follows. Catalyzes the hydrolysis of N-formyl-L-kynurenine to L-kynurenine, the second step in the kynurenine pathway of tryptophan degradation. Kynurenine may be further oxidized to nicotinic acid, NAD(H) and NADP(H). Required for elimination of toxic metabolites. The protein is Kynurenine formamidase of Eremothecium gossypii (strain ATCC 10895 / CBS 109.51 / FGSC 9923 / NRRL Y-1056) (Yeast).